A 122-amino-acid chain; its full sequence is Large ribosomal subunit protein uL14 (122 aa).

It belongs to the universal ribosomal protein uL14 family. As to quaternary structure, part of the 50S ribosomal subunit. Forms a cluster with proteins L3 and L19. In the 70S ribosome, L14 and L19 interact and together make contacts with the 16S rRNA in bridges B5 and B8.

Functionally, binds to 23S rRNA. Forms part of two intersubunit bridges in the 70S ribosome. This Campylobacter hominis (strain ATCC BAA-381 / DSM 21671 / CCUG 45161 / LMG 19568 / NCTC 13146 / CH001A) protein is Large ribosomal subunit protein uL14.